Here is a 343-residue protein sequence, read N- to C-terminus: Aspartate carbamoyltransferase catalytic subunit (343 aa).

Positions 91 and 92 each coordinate carbamoyl phosphate. Lysine 119 is a binding site for L-aspartate. The carbamoyl phosphate site is built by arginine 141, histidine 171, and glutamine 174. 2 residues coordinate L-aspartate: arginine 204 and arginine 259. Carbamoyl phosphate contacts are provided by glycine 300 and proline 301.

It belongs to the aspartate/ornithine carbamoyltransferase superfamily. ATCase family. As to quaternary structure, heterododecamer (2C3:3R2) of six catalytic PyrB chains organized as two trimers (C3), and six regulatory PyrI chains organized as three dimers (R2).

The enzyme catalyses carbamoyl phosphate + L-aspartate = N-carbamoyl-L-aspartate + phosphate + H(+). It participates in pyrimidine metabolism; UMP biosynthesis via de novo pathway; (S)-dihydroorotate from bicarbonate: step 2/3. Its function is as follows. Catalyzes the condensation of carbamoyl phosphate and aspartate to form carbamoyl aspartate and inorganic phosphate, the committed step in the de novo pyrimidine nucleotide biosynthesis pathway. This Burkholderia cenocepacia (strain HI2424) protein is Aspartate carbamoyltransferase catalytic subunit.